A 367-amino-acid chain; its full sequence is Aspartate-semialdehyde dehydrogenase (367 aa).

NADP(+)-binding positions include 10–13 (RGMV), 37–38 (TS), and Gln-73. Residue Arg-102 coordinates phosphate. Cys-135 (acyl-thioester intermediate) is an active-site residue. The residue at position 135 (Cys-135) is an S-cysteinyl cysteine; in inhibited form. Gln-162 serves as a coordination point for substrate. NADP(+)-binding positions include 165-166 (SG) and Pro-193. Glu-241 provides a ligand contact to substrate. Position 244 (Lys-244) interacts with phosphate. Arg-267 is a binding site for substrate. His-274 acts as the Proton acceptor in catalysis. Residue Gln-350 coordinates NADP(+).

Belongs to the aspartate-semialdehyde dehydrogenase family. Homodimer.

The catalysed reaction is L-aspartate 4-semialdehyde + phosphate + NADP(+) = 4-phospho-L-aspartate + NADPH + H(+). It functions in the pathway amino-acid biosynthesis; L-lysine biosynthesis via DAP pathway; (S)-tetrahydrodipicolinate from L-aspartate: step 2/4. It participates in amino-acid biosynthesis; L-methionine biosynthesis via de novo pathway; L-homoserine from L-aspartate: step 2/3. Its pathway is amino-acid biosynthesis; L-threonine biosynthesis; L-threonine from L-aspartate: step 2/5. Its function is as follows. Catalyzes the NADPH-dependent formation of L-aspartate-semialdehyde (L-ASA) by the reductive dephosphorylation of L-aspartyl-4-phosphate. The polypeptide is Aspartate-semialdehyde dehydrogenase (Escherichia coli O6:H1 (strain CFT073 / ATCC 700928 / UPEC)).